Reading from the N-terminus, the 181-residue chain is Acetolactate synthase small subunit (181 aa).

Positions 4-78 (TLSVLVEDES…NVLKIQDITN (75 aa)) constitute an ACT domain.

Belongs to the acetolactate synthase small subunit family. In terms of assembly, dimer of large and small chains.

It is found in the plastid. Its subcellular location is the chloroplast. The catalysed reaction is 2 pyruvate + H(+) = (2S)-2-acetolactate + CO2. The protein operates within amino-acid biosynthesis; L-isoleucine biosynthesis; L-isoleucine from 2-oxobutanoate: step 1/4. It participates in amino-acid biosynthesis; L-valine biosynthesis; L-valine from pyruvate: step 1/4. This Galdieria sulphuraria (Red alga) protein is Acetolactate synthase small subunit (ilvH).